The primary structure comprises 234 residues: Probable transcriptional regulatory protein Pfl01_3677 (234 aa).

Belongs to the TACO1 family.

Its subcellular location is the cytoplasm. The sequence is that of Probable transcriptional regulatory protein Pfl01_3677 from Pseudomonas fluorescens (strain Pf0-1).